The primary structure comprises 134 residues: MSFIREFKEFVMRGNVIDLAVAVVIGAAFGKIVTALVDKIISPLIGVMVGGIDFSKLSLTLKAATVDTAGKEVPAVVIGYGDFLNTILQFIIIAFAIFIIVKMINKVTNKQPLPPETPSEDVLLLREIRDSLKK.

The next 2 helical transmembrane spans lie at 16–36 and 81–101; these read VIDLAVAVVIGAAFGKIVTAL and GDFLNTILQFIIIAFAIFIIV.

This sequence belongs to the MscL family. In terms of assembly, homopentamer.

The protein resides in the cell inner membrane. Functionally, channel that opens in response to stretch forces in the membrane lipid bilayer. May participate in the regulation of osmotic pressure changes within the cell. This Xylella fastidiosa (strain M12) protein is Large-conductance mechanosensitive channel.